A 171-amino-acid chain; its full sequence is Transcriptional repressor NrdR (171 aa).

The disordered stretch occupies residues 1–21 (MQCPHCQHTDSRVLESRSSEN). The segment at 3-34 (CPHCQHTDSRVLESRSSENGQSIRRRRECLQC) is a zinc-finger region. The span at 7–18 (QHTDSRVLESRS) shows a compositional bias: basic and acidic residues. Residues 49–139 (ITVIKKDGKR…VYGNFQGIRD (91 aa)) enclose the ATP-cone domain.

This sequence belongs to the NrdR family. It depends on Zn(2+) as a cofactor.

In terms of biological role, negatively regulates transcription of bacterial ribonucleotide reductase nrd genes and operons by binding to NrdR-boxes. In Microcystis aeruginosa (strain NIES-843 / IAM M-2473), this protein is Transcriptional repressor NrdR.